The following is a 163-amino-acid chain: uncharacterized protein (163 aa).

Positions 144–163 (WSHSQSQLGTPGRGKGALGF) are disordered. Residues 154–163 (PGRGKGALGF) are compositionally biased toward gly residues.

This is an uncharacterized protein from Homo sapiens (Human).